A 312-amino-acid polypeptide reads, in one-letter code: 1-phosphofructokinase (312 aa).

ATP-binding positions include 223 to 228 (SLGAEG) and 254 to 255 (GD). The Proton acceptor role is filled by Asp255.

It belongs to the carbohydrate kinase PfkB family.

The enzyme catalyses beta-D-fructose 1-phosphate + ATP = beta-D-fructose 1,6-bisphosphate + ADP + H(+). Its function is as follows. Catalyzes the ATP-dependent phosphorylation of fructose-l-phosphate to fructose-l,6-bisphosphate. This is 1-phosphofructokinase (fruK) from Escherichia coli O157:H7.